The following is a 1065-amino-acid chain: Exportin-T (1065 aa).

The protein belongs to the exportin family.

It localises to the nucleus. The protein localises to the cytoplasm. Its function is as follows. tRNA nucleus export receptor which facilitates tRNA translocation across the nuclear pore complex. Involved in pre-tRNA splicing, probably by affecting the interaction of pre-tRNA with splicing endonuclease. The chain is Exportin-T (LOS1) from Coprinopsis cinerea (strain Okayama-7 / 130 / ATCC MYA-4618 / FGSC 9003) (Inky cap fungus).